A 345-amino-acid chain; its full sequence is S-adenosylmethionine:tRNA ribosyltransferase-isomerase (345 aa).

This sequence belongs to the QueA family. As to quaternary structure, monomer.

Its subcellular location is the cytoplasm. It carries out the reaction 7-aminomethyl-7-carbaguanosine(34) in tRNA + S-adenosyl-L-methionine = epoxyqueuosine(34) in tRNA + adenine + L-methionine + 2 H(+). It functions in the pathway tRNA modification; tRNA-queuosine biosynthesis. In terms of biological role, transfers and isomerizes the ribose moiety from AdoMet to the 7-aminomethyl group of 7-deazaguanine (preQ1-tRNA) to give epoxyqueuosine (oQ-tRNA). This is S-adenosylmethionine:tRNA ribosyltransferase-isomerase from Anaeromyxobacter sp. (strain K).